The sequence spans 85 residues: RNA-binding protein Hfq (85 aa).

The Sm domain maps to 9 to 68 (DPFLNALRRERIPVSIYLVNGIKLQGQIESFDQFVVLLKNTVSQMVYKHAISTVVPARIP).

Belongs to the Hfq family. As to quaternary structure, homohexamer.

Functionally, RNA chaperone that binds small regulatory RNA (sRNAs) and mRNAs to facilitate mRNA translational regulation in response to envelope stress, environmental stress and changes in metabolite concentrations. Also binds with high specificity to tRNAs. This Idiomarina loihiensis (strain ATCC BAA-735 / DSM 15497 / L2-TR) protein is RNA-binding protein Hfq.